The sequence spans 199 residues: TATA-box-binding protein (199 aa).

Tandem repeats lie at residues 10-86 and 101-177.

Belongs to the TBP family.

General factor that plays a role in the activation of archaeal genes transcribed by RNA polymerase. Binds specifically to the TATA box promoter element which lies close to the position of transcription initiation. The polypeptide is TATA-box-binding protein (Pyrobaculum calidifontis (strain DSM 21063 / JCM 11548 / VA1)).